The following is a 100-amino-acid chain: Small ribosomal subunit protein uS14 (100 aa).

It belongs to the universal ribosomal protein uS14 family. Part of the 30S ribosomal subunit. Contacts proteins S3 and S10.

Functionally, binds 16S rRNA, required for the assembly of 30S particles and may also be responsible for determining the conformation of the 16S rRNA at the A site. This Acaryochloris marina (strain MBIC 11017) protein is Small ribosomal subunit protein uS14.